The sequence spans 261 residues: uncharacterized protein (261 aa).

Polar residues predominate over residues 20 to 34; that stretch reads TMSTPFLESDNSNTQ. Residues 20–55 are disordered; that stretch reads TMSTPFLESDNSNTQSISGRIGSNNNSNSKNSGGIG. The segment covering 35–51 has biased composition (low complexity); the sequence is SISGRIGSNNNSNSKNS. 3 consecutive transmembrane segments (helical) span residues 113 to 133, 183 to 200, and 204 to 226; these read LFSGLFGGGFILTFILCILLL, LIFWITLYGTPIFWILFF, and IISLQFAWILIPIIALSLNMANV.

This sequence belongs to the TVP23 family.

It is found in the membrane. This is an uncharacterized protein from Dictyostelium discoideum (Social amoeba).